Reading from the N-terminus, the 186-residue chain is Large ribosomal subunit protein uL5c (186 aa).

The protein belongs to the universal ribosomal protein uL5 family. In terms of assembly, part of the 50S ribosomal subunit; contacts the 5S rRNA.

It is found in the plastid. Its subcellular location is the chloroplast. Its function is as follows. Binds 5S rRNA, forms part of the central protuberance of the 50S subunit. The polypeptide is Large ribosomal subunit protein uL5c (rpl5) (Pleurastrum terricola (Filamentous green alga)).